Reading from the N-terminus, the 300-residue chain is Protein Bel-1 (300 aa).

Disordered stretches follow at residues 1–20 (MDSY…QDLQ), 26–50 (VGPE…RRPR), and 185–237 (KPST…GDTV). The segment covering 11-20 (ASTSGLQDLQ) has biased composition (polar residues). A DNA-binding region spans residues 89–200 (SKSICKRLIL…PEGPKPRRRH (112 aa)). The span at 201–210 (DPVLRCDMFE) shows a compositional bias: basic and acidic residues. Residues 211–222 (KHHKPRPKRSRK) are compositionally biased toward basic residues. The short motif at 214-223 (KPRPKRSRKR) is the Nuclear localization signal element. The interval 224 to 300 (SIDHESCASS…PSGSGEHSVL (77 aa)) is transactivation domain.

In terms of assembly, homodimer or homomultimer. Forms complexes with the host nuclear factors NFIA, NFIB, NFIC or NFIX.

It localises to the host nucleus. In terms of biological role, transcriptional transactivator that activates the viral internal promoter (IP), thereby enhancing its own expression. This transactivation is repressed by nuclear factor I. Also transactivates the long terminal repeat (LTR) promoter, thereby inducing structural gene expression, initiating the late phase of infection. It is therefore a key regulator of viral gene expression. It directly binds to and activates DNA target sites of viral promoters and those of distinct cellular genes. Required for viral replication. This is Protein Bel-1 (bel1) from Pan troglodytes (Chimpanzee).